The primary structure comprises 301 residues: GTPase Era (301 aa).

The Era-type G domain maps to Lys7–Glu173. The segment at Gly15–Ser22 is G1. Gly15–Ser22 provides a ligand contact to GTP. Residues Gln41–Asn45 form a G2 region. The G3 stretch occupies residues Asp62 to Gly65. Residues Asp62 to Ile66 and Asn123 to Asp126 contribute to the GTP site. The tract at residues Asn123–Asp126 is G4. Positions Ile152–Ala154 are G5. Positions Thr204–His281 constitute a KH type-2 domain.

It belongs to the TRAFAC class TrmE-Era-EngA-EngB-Septin-like GTPase superfamily. Era GTPase family. As to quaternary structure, monomer.

The protein resides in the cytoplasm. It is found in the cell membrane. In terms of biological role, an essential GTPase that binds both GDP and GTP, with rapid nucleotide exchange. Plays a role in 16S rRNA processing and 30S ribosomal subunit biogenesis and possibly also in cell cycle regulation and energy metabolism. This chain is GTPase Era, found in Lactobacillus helveticus (strain DPC 4571).